A 200-amino-acid polypeptide reads, in one-letter code: Small ribosomal subunit protein uS4 (200 aa).

Positions 92-155 (SRLDAVVYSL…QNLDIIKESV (64 aa)) constitute an S4 RNA-binding domain.

It belongs to the universal ribosomal protein uS4 family. Part of the 30S ribosomal subunit. Contacts protein S5. The interaction surface between S4 and S5 is involved in control of translational fidelity.

One of the primary rRNA binding proteins, it binds directly to 16S rRNA where it nucleates assembly of the body of the 30S subunit. Functionally, with S5 and S12 plays an important role in translational accuracy. This is Small ribosomal subunit protein uS4 from Staphylococcus epidermidis (strain ATCC 35984 / DSM 28319 / BCRC 17069 / CCUG 31568 / BM 3577 / RP62A).